Reading from the N-terminus, the 215-residue chain is METQAEQQELETLPTTKMAQTNPTPGSLGPWKITIYDQENFQGKRMEFTSSCPNVSERSFDNVRSLKVESGAWIGYEHTSFCGQQFILERGEYPRWDAWSGSNAYHIERLMSFRPICSANHKESKMTIFEKENFIGRQWEISDDYPSLQAMGWFNNEVGSMKIQSGAWVCYQYPGYRGYQYILECDHHGGDYKHWREWGSHAQTSQIQSIRRIQQ.

Residue Met1 is modified to N-acetylmethionine. A compositionally biased stretch (low complexity) spans 1–16; sequence METQAEQQELETLPTT. Positions 1–29 are disordered; it reads METQAEQQELETLPTTKMAQTNPTPGSLG. Residues 1–30 are N-terminal arm; it reads METQAEQQELETLPTTKMAQTNPTPGSLGP. The residue at position 2 (Glu2) is an N-acetylalanine. 2 Beta/gamma crystallin 'Greek key' domains span residues 31-70 and 71-117; these read WKIT…KVES and GAWI…RPIC. Cys82 and Cys117 each carry S-glutathionyl cysteine; alternate. Cys82 and Cys117 each carry S-methylcysteine; alternate. The interval 118–123 is connecting peptide; the sequence is SANHKE. Beta/gamma crystallin 'Greek key' domains lie at 124–165 and 166–214; these read SKMT…KIQS and GAWV…RRIQ. An S-methylcysteine modification is found at Cys185.

The protein belongs to the beta/gamma-crystallin family. Homo/heterodimer, or complexes of higher-order. The structure of beta-crystallin oligomers seems to be stabilized through interactions between the N-terminal arms. Interacts with CRYBA1. In terms of processing, specific cleavages in the N-terminal arm occur during lens maturation and give rise to several truncated forms. Cleavages do not seem to have adverse effects on solubility. Post-translationally, S-methylation and glutathionylation occur in normal young lenses and do not seem to be detrimental.

Functionally, crystallins are the dominant structural components of the vertebrate eye lens. This chain is Beta-crystallin A3, found in Homo sapiens (Human).